Here is a 173-residue protein sequence, read N- to C-terminus: Transcriptional regulator ERG homolog (173 aa).

The ETS DNA-binding region spans 1-84 (SGQIQLWQFL…HGKRYAYKFD (84 aa)).

It belongs to the ETS family.

It is found in the nucleus. Acts as a transcriptional activator. The polypeptide is Transcriptional regulator ERG homolog (ERG) (Lytechinus variegatus (Green sea urchin)).